The following is a 332-amino-acid chain: Ribose operon repressor (332 aa).

Residues 2–56 (ATMKDIARLAQVSTSTVSHVINGSRFVSDEIREKVMRIVAELNYTPSAVARSLKV) enclose the HTH lacI-type domain. Residues 4-23 (MKDIARLAQVSTSTVSHVIN) constitute a DNA-binding region (H-T-H motif).

Functionally, transcriptional repressor for the ribose rbsDACBK operon. This chain is Ribose operon repressor (rbsR), found in Haemophilus influenzae (strain ATCC 51907 / DSM 11121 / KW20 / Rd).